Reading from the N-terminus, the 320-residue chain is Mitochondrial thiamine pyrophosphate carrier (320 aa).

3 Solcar repeats span residues 13–106, 116–202, and 214–309; these read NTKL…LTEL, REFS…LKHL, and NENL…FCNV. Residues 19-39 form a helical membrane-spanning segment; the sequence is AVAGSVSGLVTRALISPFDVI. Ser51 is modified (phosphoserine). The next 4 membrane-spanning stretches (helical) occupy residues 87-107, 122-142, 173-193, and 220-240; these read ILSIGYGAVQFLSFEMLTELV, FVCGGLAACTATLTVHPVDVL, VFYKGLAPTLIAIFPYAGLQF, and LLCGSGAGVISKTLTYPLDLF. The Substrate recognition signature appears at 241–246; it reads KKRLQV. The helical transmembrane segment at 293 to 313 threads the bilayer; it reads ALSTGFMFFWYEFFCNVFHCM.

It belongs to the mitochondrial carrier (TC 2.A.29) family.

It is found in the mitochondrion membrane. It carries out the reaction thiamine phosphate(out) + thiamine diphosphate(in) = thiamine phosphate(in) + thiamine diphosphate(out). Functionally, mitochondrial transporter mediating uptake of thiamine diphosphate into mitochondria. It is not clear if the antiporter activity is affected by the membrane potential or by the proton electrochemical gradient. The protein is Mitochondrial thiamine pyrophosphate carrier (SLC25A19) of Macaca fascicularis (Crab-eating macaque).